Reading from the N-terminus, the 106-residue chain is UPF0145 protein Tpet_0165 (106 aa).

This sequence belongs to the UPF0145 family.

In Thermotoga petrophila (strain ATCC BAA-488 / DSM 13995 / JCM 10881 / RKU-1), this protein is UPF0145 protein Tpet_0165.